An 817-amino-acid chain; its full sequence is Ribonuclease R 1 (817 aa).

Residues 259-584 form the RNB domain; that stretch reads RVDYRNEITF…DLLVHRLIRE (326 aa). The S1 motif domain occupies 637–717; that stretch reads GEEYEGIIAS…MTGEIDFEYL (81 aa). The tract at residues 728–817 is disordered; that stretch reads AKAKKKPDHK…DGRKKPHKRG (90 aa). Over residues 729–742 the composition is skewed to basic residues; sequence KAKKKPDHKGRKKS. 2 stretches are compositionally biased toward basic and acidic residues: residues 767-777 and 795-810; these read RRADEKFEFDK and KFTD…TDGR.

Belongs to the RNR ribonuclease family. RNase R subfamily.

The protein resides in the cytoplasm. The catalysed reaction is Exonucleolytic cleavage in the 3'- to 5'-direction to yield nucleoside 5'-phosphates.. In terms of biological role, 3'-5' exoribonuclease that releases 5'-nucleoside monophosphates and is involved in maturation of structured RNAs. This is Ribonuclease R 1 (rnr1) from Lactococcus lactis subsp. lactis (strain IL1403) (Streptococcus lactis).